The following is a 174-amino-acid chain: Large ribosomal subunit protein bL17 (174 aa).

It belongs to the bacterial ribosomal protein bL17 family. Part of the 50S ribosomal subunit. Contacts protein L32.

This is Large ribosomal subunit protein bL17 from Acetivibrio thermocellus (strain ATCC 27405 / DSM 1237 / JCM 9322 / NBRC 103400 / NCIMB 10682 / NRRL B-4536 / VPI 7372) (Clostridium thermocellum).